The primary structure comprises 84 residues: Large ribosomal subunit protein bL27c (84 aa).

The interval 1–23 is disordered; sequence MAHKKGAGSTKNGRDSNAKRLGV.

The protein belongs to the bacterial ribosomal protein bL27 family.

It localises to the plastid. The protein localises to the chloroplast. This is Large ribosomal subunit protein bL27c from Thalassiosira pseudonana (Marine diatom).